The following is a 155-amino-acid chain: NADPH-dependent 7-cyano-7-deazaguanine reductase (155 aa).

C53 serves as the catalytic Thioimide intermediate. The active-site Proton donor is the D60. Residues 75-77 (VES) and 94-95 (HE) contribute to the substrate site.

The protein belongs to the GTP cyclohydrolase I family. QueF type 1 subfamily.

It is found in the cytoplasm. The enzyme catalyses 7-aminomethyl-7-carbaguanine + 2 NADP(+) = 7-cyano-7-deazaguanine + 2 NADPH + 3 H(+). Its pathway is tRNA modification; tRNA-queuosine biosynthesis. In terms of biological role, catalyzes the NADPH-dependent reduction of 7-cyano-7-deazaguanine (preQ0) to 7-aminomethyl-7-deazaguanine (preQ1). In Brucella abortus (strain S19), this protein is NADPH-dependent 7-cyano-7-deazaguanine reductase.